We begin with the raw amino-acid sequence, 307 residues long: Transcriptional repressor scratch 2 (307 aa).

Residues M1–V20 are SNAG domain. 2 disordered regions span residues L34–S90 and G116–Q148. The span at G124–Q148 shows a compositional bias: gly residues. 4 C2H2-type zinc fingers span residues H155–H177, R186–H208, H212–H234, and F240–H262. The C2H2-type 5; atypical zinc-finger motif lies at Y268–C291.

It belongs to the snail C2H2-type zinc-finger protein family.

The protein localises to the nucleus. In terms of biological role, may be involved in transcriptional regulation. This is Transcriptional repressor scratch 2 (SCRT2) from Homo sapiens (Human).